The primary structure comprises 319 residues: Ribosomal RNA small subunit methyltransferase H (319 aa).

S-adenosyl-L-methionine-binding positions include 39-41 (GGH), Asp59, Phe83, Asp104, and Gln111.

Belongs to the methyltransferase superfamily. RsmH family.

The protein localises to the cytoplasm. The catalysed reaction is cytidine(1402) in 16S rRNA + S-adenosyl-L-methionine = N(4)-methylcytidine(1402) in 16S rRNA + S-adenosyl-L-homocysteine + H(+). In terms of biological role, specifically methylates the N4 position of cytidine in position 1402 (C1402) of 16S rRNA. In Ralstonia pickettii (strain 12J), this protein is Ribosomal RNA small subunit methyltransferase H.